A 716-amino-acid polypeptide reads, in one-letter code: Ciliary WD repeat-containing protein ctxp80 (716 aa).

The interval 1–53 (MGCGGSSGASDPSSEKINWNNAEIHDEFKQEQKKAGAKRKAFDKTTGKAVEKE) is disordered. Positions 8-21 (GASDPSSEKINWNN) are enriched in polar residues. The segment covering 23 to 53 (EIHDEFKQEQKKAGAKRKAFDKTTGKAVEKE) has biased composition (basic and acidic residues). WD repeat units lie at residues 167-208 (YHTN…KKGR), 213-254 (KGGR…QVKK), 257-297 (SGPD…FKKK), 305-343 (GKPT…STYD), 345-382 (HGKG…AEKT), 424-462 (HSDG…STAL), 529-568 (DSGE…KLGT), 571-610 (AHNS…QDPS), 639-678 (TDGT…GATP), and 683-715 (GHSE…QWKK).

Belongs to the WD repeat EMAP family.

In Euplotoides octocarinatus (Freshwater ciliate), this protein is Ciliary WD repeat-containing protein ctxp80.